We begin with the raw amino-acid sequence, 348 residues long: MNLKGKRITVHDMTLRDGMHPKRHQMTLDQMRAVATGLDAAGVPLIEVTHGDGLGGSSVNYGFPAHTDAEYLGAVIPLLKRAKVSALLLPGIGTVDHLKEAHALGVHTIRVATHCTEADVSEQHIAMARKLDMDTVGFLMMSHMNSPEGLVKQAKLMESYGANCIYITDSAGYMLPDDVKARLGAVRDALQPQTELGFHGHHNLAMGVANSIAAIEAGANRIDGAAAGLGAGAGNTPLEVFVAVCERMGIETGVDVWKIQDVAEDLVVPMMDFPIRLDRDALTLGYAGVYGSFLLFAKRAGDKYGIPARDILVELGRRGMVGGQEDMIEDTALTLAKARAAQAKREAA.

One can recognise a Pyruvate carboxyltransferase domain in the interval 8–260 (ITVHDMTLRD…ETGVDVWKIQ (253 aa)). 16–17 (RD) provides a ligand contact to substrate. Residue Asp-17 coordinates Mn(2+). His-20 serves as the catalytic Proton acceptor. Substrate contacts are provided by Ser-170 and His-199. Mn(2+)-binding residues include His-199 and His-201. Position 290 (Tyr-290) interacts with substrate.

Belongs to the 4-hydroxy-2-oxovalerate aldolase family.

The catalysed reaction is (S)-4-hydroxy-2-oxopentanoate = acetaldehyde + pyruvate. The polypeptide is 4-hydroxy-2-oxovalerate aldolase 3 (Burkholderia lata (strain ATCC 17760 / DSM 23089 / LMG 22485 / NCIMB 9086 / R18194 / 383)).